The sequence spans 178 residues: ATP synthase subunit delta (178 aa).

Belongs to the ATPase delta chain family. In terms of assembly, F-type ATPases have 2 components, F(1) - the catalytic core - and F(0) - the membrane proton channel. F(1) has five subunits: alpha(3), beta(3), gamma(1), delta(1), epsilon(1). F(0) has three main subunits: a(1), b(2) and c(10-14). The alpha and beta chains form an alternating ring which encloses part of the gamma chain. F(1) is attached to F(0) by a central stalk formed by the gamma and epsilon chains, while a peripheral stalk is formed by the delta and b chains.

Its subcellular location is the cell membrane. F(1)F(0) ATP synthase produces ATP from ADP in the presence of a proton or sodium gradient. F-type ATPases consist of two structural domains, F(1) containing the extramembraneous catalytic core and F(0) containing the membrane proton channel, linked together by a central stalk and a peripheral stalk. During catalysis, ATP synthesis in the catalytic domain of F(1) is coupled via a rotary mechanism of the central stalk subunits to proton translocation. Functionally, this protein is part of the stalk that links CF(0) to CF(1). It either transmits conformational changes from CF(0) to CF(1) or is implicated in proton conduction. The chain is ATP synthase subunit delta from Geobacillus sp. (strain WCH70).